A 510-amino-acid polypeptide reads, in one-letter code: Maturase K (510 aa).

The protein belongs to the intron maturase 2 family. MatK subfamily.

The protein localises to the plastid. Its subcellular location is the chloroplast. In terms of biological role, usually encoded in the trnK tRNA gene intron. Probably assists in splicing its own and other chloroplast group II introns. The chain is Maturase K from Mammillaria haageana (Cactus).